The primary structure comprises 944 residues: Weak acid resistance protein 1 (944 aa).

The zn(2)-C6 fungal-type DNA-binding region spans 76 to 109 (CVCCHSLKQKCEPSDVNDIYRKPCRRCLKHKKLC). Disordered stretches follow at residues 114 to 171 (SKRT…AKQF) and 197 to 225 (SYGA…SVPT). Residue threonine 128 is modified to Phosphothreonine. 2 stretches are compositionally biased toward polar residues: residues 135 to 144 (VNVSTKSKGP) and 205 to 225 (TTST…SVPT).

As to quaternary structure, homodimer. Post-translationally, phosphorylation is required for PDR12 induction.

Its subcellular location is the nucleus. Its function is as follows. transcription factor which binds to a weak acid response element (WARE) to mediate stress induction of PDR12 and FUN34, encoding an acid transporter and a putative ammonia transporter, respectively. The polypeptide is Weak acid resistance protein 1 (WAR1) (Saccharomyces cerevisiae (strain ATCC 204508 / S288c) (Baker's yeast)).